A 905-amino-acid chain; its full sequence is Sun domain-containing protein 1 (905 aa).

Disordered regions lie at residues 1 to 21 (MSGD…LPLQ), 41 to 166 (NNTV…ILKQ), and 207 to 242 (QQQQ…IDNN). At 1-290 (MSGDYKPNYQ…NNNNKVNFKQ (290 aa)) the chain is on the nuclear side. 2 stretches are compositionally biased toward low complexity: residues 41 to 67 (NNTV…SSYL) and 75 to 101 (SNQI…ASSS). The span at 107–116 (KVDHNSHNNN) shows a compositional bias: basic and acidic residues. A compositionally biased stretch (acidic residues) spans 117–126 (DDDDIEDDVD). Residues 129 to 146 (YSTNNASSNILHNRFSNS) show a composition bias toward polar residues. A coiled-coil region spans residues 170 to 221 (LYNHLNNQIQQQQQQQQQQQQQQQQQQQQQQQQQQQQQQQQQQQRNNNNNSN). Positions 207 to 227 (QQQQQQQRNNNNNSNSSNNNN) are enriched in low complexity. A helical transmembrane segment spans residues 291–311 (AIWIFIFSVLFIGCLLGLFST). The Perinuclear space segment spans residues 312 to 905 (NFYGIHIYFP…IEKQQQSDEL (594 aa)). Coiled coils occupy residues 359–456 (KKNE…QLIQ) and 504–609 (REFN…TQQF). The SUN domain occupies 662–860 (GASIEYNALH…YRFRVHGYQI (199 aa)). Positions 864–901 (EQEQIQIIQEEQSFKQEEINQQQIEQIEQIEQIEKQQQ) form a coiled coil.

As to quaternary structure, homodimer and homooligomer.

Its subcellular location is the nucleus membrane. Functionally, may have an important role in defining the spacing of the nuclear envelope lumen. Essential for centrosome attachment to the nucleus, maintenance of correct ploidy, proper mitosis, association of the centromere cluster with the centrosome and the maintenance of genome stability. Requires direct chromatin binding for inner nuclear membrane targeting. The sequence is that of Sun domain-containing protein 1 (sun1) from Dictyostelium discoideum (Social amoeba).